Consider the following 352-residue polypeptide: Selenide, water dikinase (352 aa).

The active site involves Cys-23. ATP contacts are provided by residues Lys-26 and 54 to 56; that span reads SRD. Asp-57 provides a ligand contact to Mg(2+). Residues Asp-74, Asp-97, and 145 to 147 contribute to the ATP site; that span reads GHS. Asp-97 provides a ligand contact to Mg(2+). Residue Asp-233 coordinates Mg(2+).

Belongs to the selenophosphate synthase 1 family. Class I subfamily. As to quaternary structure, homodimer. Requires Mg(2+) as cofactor.

It catalyses the reaction hydrogenselenide + ATP + H2O = selenophosphate + AMP + phosphate + 2 H(+). Functionally, synthesizes selenophosphate from selenide and ATP. The polypeptide is Selenide, water dikinase (Shewanella baltica (strain OS223)).